Reading from the N-terminus, the 2472-residue chain is MDPSGVKVLETAEDIQERRQQVLDRYHRFKELSTLRRQKLEDSYRFQFFQRDAEELEKWIQEKLQVASDENYKDPTNLQGKLQKHQAFEAEVQANSGAIVKLDETGNLMISEGHFASETIRTRLMELHRQWELLLEKMREKGIKLLQAQKLVQYLRECEDVMDWINDKEAIVTSEELGQDLEHVEVLQKKFEEFQTDLAAHEERVNEVSQFAAKLIQEQHPEEELIKTKQDEVNAAWQRLKGLALQRQGKLFGAAEVQRFNRDVDETIGWIKEKEQLMASDDFGRDLASVQALLRKHEGLERDLAALEDKVKALCAEADRLQQSHPLSASQIQVKREELITNWEQIRTLAAERHARLDDSYRLQRFLADFRDLTSWVTEMKALINADELANDVAGAEALLDRHQEHKGEIDAHEDSFKSADESGQALLAASHYASDEVREKLSILSEERTALLELWELRRQQYEQCMDLQLFYRDTEQVDNWMSKQEAFLLNEDLGDSLDSVEALLKKHEDFEKSLSAQEEKITALDEFATKLIQNNHYAMEDVATRRDALLSRRNALHERAMHRRAQLADSFHLQQFFRDSDELKSWVNEKMKTATDEAYKDPSNLQGKVQKHQAFEAELSANQSRIDALEKAGQKLIDVNHYAKEEVAARMNEVISLWKKLLEATELKGIKLREANQQQQFNRNVEDIELWLYEVEGHLASDDYGKDLTNVQNLQKKHALLEADVAAHQDRIDGITIQARQFQDAGHFDAENIKKKQEALVARYEALKEPMVARKQKLADSLRLQQLFRDVEDEETWIREKEPIAASTNRGKDLIGVQNLLKKHQALQAEIAGHEPRIKAVTQKGNAMVEEGHFAAEDVKAKLSELNQKWEALKAKASQRRQDLEDSLQAQQYFADANEAESWMREKEPIVGSTDYGKDEDSAEALLKKHEALMSDLSAYGSSIQALREQAQSCRQQVAPMDDETGKELVLALYDYQEKSPREVTMKKGDILTLLNSTNKDWWKVEVNDRQGFVPAAYVKKLDPAQSASRENLLEEQGSIALRQGQIDNQTRITKEAGSVSLRMKQVEELYQSLLELGEKRKGMLEKSCKKFMLFREANELQQWITEKEAALTNEEVGADLEQVEVLQKKFDDFQKDLKANESRLKDINKVAEDLESEGLMAEEVQAVQQQEVYGAMPRDEADSKTASPWKSARLMVHTVATFNSIKELNERWRSLQQLAEERSQLLGSAHEVQRFHRDADETKEWIEEKNQALNTDNYGHDLASVQALQRKHEGFERDLAALGDKVNSLGETAQRLIQSHPESAEDLKEKCTELNQAWTSLGKRADQRKAKLGDSHDLQRFLSDFRDLMSWINGIRGLVSSDELAKDVTGAEALLERHQEHRTEIDARAGTFQAFEQFGQQLLAHGHYASPEIKEKLDILDQERTDLEKAWVQRRMMLDHCLELQLFHRDCEQAENWMAAREAFLNTEDKGDSLDSVEALIKKHEDFDKAINVQEEKIAALQAFADQLIAVDHYAKGDIANRRNEVLDRWRRLKAQMIEKRSKLGESQTLQQFSRDVDEIEAWISEKLQTASDESYKDPTNIQSKHQKHQAFEAELHANADRIRGVIDMGNSLIERGACAGSEDAVKARLAALADQWQFLVQKSAEKSQKLKEANKQQNFNTGIKDFDFWLSEVEALLASEDYGKDLASVNNLLKKHQLLEADISAHEDRLKDLNSQADSLMTSSAFDTSQVKEKRDTINGRFQKIKSMATSRRAKLSESHRLHQFFRDMDDEESWIKEKKLLVSSEDYGRDLTGVQNLRKKHKRLEAELAAHEPAIQGVLDTGKKLSDDNTIGQEEIQQRLAQFVEHWKELKQLAAARGQRLEESLEYQQFVANVEEEEAWINEKMTLVASEDYGDTLAAIQGLLKKHEAFETDFTVHKDRVNDVCTNGQDLIKKNNHHEENISSKMKGLNGKVSDLEKAAAQRKAKLDENSAFLQFNWKADVVESWIGEKENSLKTDDYGRDLSSVQTLLTKQETFDAGLQAFQQEGIANITALKDQLLAAKHIQSKAIEARHASLMKRWTQLLANSATRKKKLLEAQSHFRKVEDLFLTFAKKASAFNSWFENAEEDLTDPVRCNSLEEIKALREAHDAFRSSLSSAQADFNQLAELDRQIKSFRVASNPYTWFTMEALEETWRNLQKIIKERELELQKEQRRQEENDKLRQEFAQHANAFHQWIQETRTYLLDGSCMVEESGTLESQLEATKRKHQEIRAMRSQLKKIEDLGAAMEEALILDNKYTEHSTVGLAQQWDQLDQLGMRMQHNLEQQIQARNTTGVTEEALKEFSMMFKHFDKDKSGRLNHQEFKSCLRSLGYDLPMVEEGEPDPEFEAILDTVDPNRDGHVSLQEYMAFMISRETENVKSSEEIESAFRALSSEGKPYVTKEELYQNLTREQADYCVSHMKPYVDGKGRELPTAFDYVEFTRSLFVN.

Methionine 1 is subject to N-acetylmethionine. 9 Spectrin repeats span residues 45-146 (RFQF…IKLL), 150-251 (KLVQ…QGKL), 256-358 (EVQR…ARLD), 361-465 (YRLQ…QYEQ), 468-570 (DLQL…AQLA), 574-676 (HLQQ…KLRE), 679-781 (QQQQ…QKLA), 785-888 (RLQQ…DLED), and 891-961 (QAQQ…QQVA). Serine 587 carries the phosphoserine modification. An N6-acetyllysine modification is found at lysine 637. Lysine 803 carries the post-translational modification N6-acetyllysine. Serine 924, serine 982, serine 999, serine 1029, serine 1031, and serine 1041 each carry phosphoserine. Residues 967-1026 (TGKELVLALYDYQEKSPREVTMKKGDILTLLNSTNKDWWKVEVNDRQGFVPAAYVKKLDP) enclose the SH3 domain. The stretch at 1096–1166 (LFREANELQQ…LESEGLMAEE (71 aa)) is one Spectrin 10 repeat. Tyrosine 1176 carries the post-translational modification Phosphotyrosine. Serine 1190, serine 1207, serine 1217, serine 1291, serine 1306, serine 1323, and serine 1338 each carry phosphoserine. The Spectrin 11 repeat unit spans residues 1233 to 1336 (HEVQRFHRDA…RADQRKAKLG (104 aa)). Spectrin repeat units lie at residues 1339–1441 (HDLQ…RMML) and 1446–1549 (ELQL…KLGE). Position 1519 is an N6-acetyllysine (lysine 1519). Phosphoserine occurs at positions 1550, 1557, 1578, 1615, and 1647. Spectrin repeat units follow at residues 1552–1656 (TLQQ…KLKE), 1659–1762 (KQQN…KLSE), 1764–1868 (HRLH…RLEE), 1871–1974 (EYQQ…KLDE), 1978–2081 (FLQF…KLLE), 2092–2194 (LFLT…LELQ), and 2206–2310 (LRQE…NLEQ). A Phosphothreonine modification is found at threonine 2020. Lysine 2052 carries the post-translational modification N6-acetyllysine. Threonine 2066 carries the phosphothreonine modification. 3 EF-hand domains span residues 2323–2358 (EALKEFSMMFKHFDKDKSGRLNHQEFKSCLRSLGYD), 2366–2401 (EPDPEFEAILDTVDPNRDGHVSLQEYMAFMISRETE), and 2404–2439 (KSSEEIESAFRALSSEGKPYVTKEELYQNLTREQAD). Ca(2+) is bound by residues aspartate 2336, aspartate 2338, serine 2340, arginine 2342, glutamate 2347, aspartate 2379, asparagine 2381, aspartate 2383, histidine 2385, and glutamate 2390. Lysine 2421 bears the N6-acetyllysine mark.

This sequence belongs to the spectrin family. Like erythrocyte spectrin, the spectrin-like proteins are capable of forming dimers which can further associate to tetramers. Interacts (via C-terminal spectrin repeats) with TRPC4. Interacts with CALM and EMD. Interacts with isoform 1 of ACP1. Identified in a complex with ACTN4, CASK, IQGAP1, MAGI2, NPHS1 and SPTBN1. Interacts with SHANK3 (via ANK repeats). Interacts with CLN3; this interaction regulates the fodrin localization at the plasma membrane. Phosphorylation of Tyr-1176 decreases sensitivity to cleavage by calpain in vitro.

The protein resides in the cytoplasm. The protein localises to the cytoskeleton. Its subcellular location is the cell cortex. Its function is as follows. Fodrin, which seems to be involved in secretion, interacts with calmodulin in a calcium-dependent manner and is thus candidate for the calcium-dependent movement of the cytoskeleton at the membrane. This is Spectrin alpha chain, non-erythrocytic 1 (Sptan1) from Mus musculus (Mouse).